A 940-amino-acid polypeptide reads, in one-letter code: UvrABC system protein A (940 aa).

31–38 lines the ATP pocket; that stretch reads GLSGSGKS. The C4-type zinc-finger motif lies at 253 to 280; sequence CPICGYSMRELEPRLFSFNNPAGACPTC. ABC transporter domains follow at residues 310-587 and 607-937; these read WDRR…PESL and ANPE…RFLK. 640–647 provides a ligand contact to ATP; it reads GVSGSGKS. The segment at 740-766 adopts a C4-type zinc-finger fold; sequence CEACQGDGVIKVEMHFLPDIYVPCDQC.

This sequence belongs to the ABC transporter superfamily. UvrA family. Forms a heterotetramer with UvrB during the search for lesions. Interacts with TRCF (Mfd). UvrB and TRCF binding to UvrA could be mutually exclusive.

It is found in the cytoplasm. Its function is as follows. The UvrABC repair system catalyzes the recognition and processing of DNA lesions. UvrA is an ATPase and a DNA-binding protein. A damage recognition complex composed of 2 UvrA and 2 UvrB subunits scans DNA for abnormalities. When the presence of a lesion has been verified by UvrB, the UvrA molecules dissociate. This chain is UvrABC system protein A, found in Escherichia coli (strain K12).